The chain runs to 351 residues: Trace amine-associated receptor 2 (351 aa).

Topologically, residues 1 to 48 are extracellular; the sequence is MAVSSEQHELSHFKRTQTKKEKFNCSEYGNRSCPENERSLGVRVAMYS. N24 and N30 each carry an N-linked (GlcNAc...) asparagine glycan. 2 disulfide bridges follow: C33/C197 and C116/C201. A helical transmembrane segment spans residues 49 to 69; it reads FMAGSIFITIFGNLAMIISIS. Residues 70 to 79 lie on the Cytoplasmic side of the membrane; the sequence is YFKQLHTPTN. A helical transmembrane segment spans residues 80 to 100; sequence FLILSMAITDFLLGFTIMPYS. Residues 101–118 lie on the Extracellular side of the membrane; the sequence is MIRSVENCWYFGLTFCKI. A helical transmembrane segment spans residues 119–139; it reads YYSFDLMLSITSIFHLCSVAI. Residues 140–162 are Cytoplasmic-facing; that stretch reads DRFYAICYPLLYSTKITIPVIKR. A helical transmembrane segment spans residues 163–183; that stretch reads LLLLCWSVPGAFAFGVVFSEA. At 184–207 the chain is on the extracellular side; that stretch reads YADGIEGYDILVACSSSCPVMFNK. A helical transmembrane segment spans residues 208–228; that stretch reads LWGTTLFMAGFFTPGSMMVGI. Over 229 to 263 the chain is Cytoplasmic; that stretch reads YGKIFAVSRKHAHAINNLRENQNNQVKKDKKAAKT. A helical transmembrane segment spans residues 264–284; that stretch reads LGIVIGVFLLCWFPCFFTILL. Over 285–299 the chain is Extracellular; sequence DPFLNFSTPVVLFDA. N289 carries an N-linked (GlcNAc...) asparagine glycan. Residues 300-322 traverse the membrane as a helical segment; that stretch reads LTWFGYFNSTCNPLIYGFFYPWF. The Cytoplasmic segment spans residues 323-351; it reads RRALKYILLGKIFSSCFHNTILCMQKESE.

It belongs to the G-protein coupled receptor 1 family. Not expressed in the pons, thalamus, hypothalamus, hippocampus, caudate, putamen, frontal cortex, basal forebrain, midbrain or liver.

It localises to the cell membrane. Its function is as follows. Orphan olfactory receptor specific for trace amines. Trace amine compounds are enriched in animal body fluids and act on trace amine-associated receptors (TAARs) to elicit both intraspecific and interspecific innate behaviors. Ligand-binding causes a conformation change that triggers signaling via the G(s)-class of G-proteins which activate adenylate cyclase. This is Trace amine-associated receptor 2 from Homo sapiens (Human).